The chain runs to 422 residues: Regulator of sigma-W protease RasP (422 aa).

The next 4 membrane-spanning stretches (helical) occupy residues 6 to 26 (VIAF…GHLL), 175 to 195 (IAAG…MLGL), 346 to 366 (IVNL…VNLL), and 394 to 414 (EAFV…VVTW). A Zn(2+)-binding site is contributed by His-20. Glu-21 is an active-site residue. His-24 provides a ligand contact to Zn(2+). A PDZ domain is found at 186 to 271 (AYVILVMLGL…TLHISVTPEA (86 aa)).

The protein belongs to the peptidase M50B family. The cofactor is Zn(2+).

It localises to the cell membrane. Its function is as follows. Is responsible for site-2 cleavage of the RsiW anti-sigma factor. This results, after a third proteolytic step catalyzed by the ClpXP protease, in the release of SigW and the transcription activation of the genes under the control of the sigma-W factor. Can also cleave liberated signal peptides of PenP and Mpr, probably within in the cell membrane. The protein is Regulator of sigma-W protease RasP of Bacillus subtilis (strain 168).